Reading from the N-terminus, the 156-residue chain is ATP synthase subunit b (156 aa).

Residues 7–27 form a helical membrane-spanning segment; it reads LFVQAIVFLILVLFTMKFVWP.

This sequence belongs to the ATPase B chain family. As to quaternary structure, F-type ATPases have 2 components, F(1) - the catalytic core - and F(0) - the membrane proton channel. F(1) has five subunits: alpha(3), beta(3), gamma(1), delta(1), epsilon(1). F(0) has three main subunits: a(1), b(2) and c(10-14). The alpha and beta chains form an alternating ring which encloses part of the gamma chain. F(1) is attached to F(0) by a central stalk formed by the gamma and epsilon chains, while a peripheral stalk is formed by the delta and b chains.

The protein localises to the cell inner membrane. Its function is as follows. F(1)F(0) ATP synthase produces ATP from ADP in the presence of a proton or sodium gradient. F-type ATPases consist of two structural domains, F(1) containing the extramembraneous catalytic core and F(0) containing the membrane proton channel, linked together by a central stalk and a peripheral stalk. During catalysis, ATP synthesis in the catalytic domain of F(1) is coupled via a rotary mechanism of the central stalk subunits to proton translocation. In terms of biological role, component of the F(0) channel, it forms part of the peripheral stalk, linking F(1) to F(0). The protein is ATP synthase subunit b of Paracidovorax citrulli (strain AAC00-1) (Acidovorax citrulli).